Here is a 338-residue protein sequence, read N- to C-terminus: GTPase Obg (338 aa).

One can recognise an Obg domain in the interval 1–159 (MQFIDQAEIE…RRIRLELKLL (159 aa)). One can recognise an OBG-type G domain in the interval 160-328 (AEVGIIGLPN…MLQATWEQLD (169 aa)). Residues 166–173 (GLPNAGKS), 191–195 (FTTLI), 213–216 (DIPG), 280–283 (NKLD), and 309–311 (SAV) each bind GTP. 2 residues coordinate Mg(2+): Ser-173 and Thr-193.

This sequence belongs to the TRAFAC class OBG-HflX-like GTPase superfamily. OBG GTPase family. As to quaternary structure, monomer. Requires Mg(2+) as cofactor.

The protein localises to the cytoplasm. Its function is as follows. An essential GTPase which binds GTP, GDP and possibly (p)ppGpp with moderate affinity, with high nucleotide exchange rates and a fairly low GTP hydrolysis rate. Plays a role in control of the cell cycle, stress response, ribosome biogenesis and in those bacteria that undergo differentiation, in morphogenesis control. This is GTPase Obg from Gloeothece citriformis (strain PCC 7424) (Cyanothece sp. (strain PCC 7424)).